Here is a 322-residue protein sequence, read N- to C-terminus: Acetyl-coenzyme A carboxylase carboxyl transferase subunit alpha (322 aa).

The region spanning 39-293 is the CoA carboxyltransferase C-terminal domain; sequence RLASKSQQLT…KRALAESLRQ (255 aa).

This sequence belongs to the AccA family. In terms of assembly, acetyl-CoA carboxylase is a heterohexamer composed of biotin carboxyl carrier protein (AccB), biotin carboxylase (AccC) and two subunits each of ACCase subunit alpha (AccA) and ACCase subunit beta (AccD).

The protein localises to the cytoplasm. It catalyses the reaction N(6)-carboxybiotinyl-L-lysyl-[protein] + acetyl-CoA = N(6)-biotinyl-L-lysyl-[protein] + malonyl-CoA. The protein operates within lipid metabolism; malonyl-CoA biosynthesis; malonyl-CoA from acetyl-CoA: step 1/1. Its function is as follows. Component of the acetyl coenzyme A carboxylase (ACC) complex. First, biotin carboxylase catalyzes the carboxylation of biotin on its carrier protein (BCCP) and then the CO(2) group is transferred by the carboxyltransferase to acetyl-CoA to form malonyl-CoA. This is Acetyl-coenzyme A carboxylase carboxyl transferase subunit alpha from Ralstonia pickettii (strain 12J).